A 643-amino-acid polypeptide reads, in one-letter code: 1-deoxy-D-xylulose-5-phosphate synthase (643 aa).

Thiamine diphosphate contacts are provided by residues H72 and 113–115 (GHA). Position 144 (D144) interacts with Mg(2+). Residues 145-146 (GA), N174, Y287, and E370 contribute to the thiamine diphosphate site. N174 provides a ligand contact to Mg(2+).

Belongs to the transketolase family. DXPS subfamily. As to quaternary structure, homodimer. Mg(2+) is required as a cofactor. It depends on thiamine diphosphate as a cofactor.

The catalysed reaction is D-glyceraldehyde 3-phosphate + pyruvate + H(+) = 1-deoxy-D-xylulose 5-phosphate + CO2. It participates in metabolic intermediate biosynthesis; 1-deoxy-D-xylulose 5-phosphate biosynthesis; 1-deoxy-D-xylulose 5-phosphate from D-glyceraldehyde 3-phosphate and pyruvate: step 1/1. Functionally, catalyzes the acyloin condensation reaction between C atoms 2 and 3 of pyruvate and glyceraldehyde 3-phosphate to yield 1-deoxy-D-xylulose-5-phosphate (DXP). This chain is 1-deoxy-D-xylulose-5-phosphate synthase, found in Prochlorococcus marinus (strain SARG / CCMP1375 / SS120).